Reading from the N-terminus, the 97-residue chain is Citrate lyase acyl carrier protein (97 aa).

O-(phosphoribosyl dephospho-coenzyme A)serine is present on S14.

It belongs to the CitD family. As to quaternary structure, oligomer with a subunit composition of (alpha,beta,gamma)6.

It localises to the cytoplasm. In terms of biological role, covalent carrier of the coenzyme of citrate lyase. The sequence is that of Citrate lyase acyl carrier protein from Escherichia fergusonii (strain ATCC 35469 / DSM 13698 / CCUG 18766 / IAM 14443 / JCM 21226 / LMG 7866 / NBRC 102419 / NCTC 12128 / CDC 0568-73).